Here is a 59-residue protein sequence, read N- to C-terminus: Putative antitoxin AF_1090 (59 aa).

It belongs to the UPF0165 family.

Functionally, possibly the antitoxin component of a type II toxin-antitoxin (TA) system. This Archaeoglobus fulgidus (strain ATCC 49558 / DSM 4304 / JCM 9628 / NBRC 100126 / VC-16) protein is Putative antitoxin AF_1090.